Reading from the N-terminus, the 281-residue chain is Probable endonuclease 4 (281 aa).

Residues His67, His107, Glu144, Asp178, His181, His215, Asp228, His230, and Glu260 each contribute to the Zn(2+) site.

The protein belongs to the AP endonuclease 2 family. Zn(2+) serves as cofactor.

It carries out the reaction Endonucleolytic cleavage to 5'-phosphooligonucleotide end-products.. Its function is as follows. Endonuclease IV plays a role in DNA repair. It cleaves phosphodiester bonds at apurinic or apyrimidinic (AP) sites, generating a 3'-hydroxyl group and a 5'-terminal sugar phosphate. This Methanocorpusculum labreanum (strain ATCC 43576 / DSM 4855 / Z) protein is Probable endonuclease 4.